The following is a 286-amino-acid chain: 33 kDa chaperonin (286 aa).

Cystine bridges form between Cys225-Cys227 and Cys258-Cys261.

It belongs to the HSP33 family. Post-translationally, under oxidizing conditions two disulfide bonds are formed involving the reactive cysteines. Under reducing conditions zinc is bound to the reactive cysteines and the protein is inactive.

It is found in the cytoplasm. Its function is as follows. Redox regulated molecular chaperone. Protects both thermally unfolding and oxidatively damaged proteins from irreversible aggregation. Plays an important role in the bacterial defense system toward oxidative stress. This chain is 33 kDa chaperonin, found in Shewanella sp. (strain MR-4).